A 318-amino-acid polypeptide reads, in one-letter code: Cobalamin biosynthesis protein CobD (318 aa).

The next 5 membrane-spanning stretches (helical) occupy residues 51 to 71 (VGGV…AWGA), 77 to 97 (LVHP…CLAA), 153 to 173 (DGVI…ALAY), 206 to 226 (LIPA…AGLS), and 296 to 316 (MYGA…ILTI).

It belongs to the CobD/CbiB family.

It localises to the cell membrane. The protein operates within cofactor biosynthesis; adenosylcobalamin biosynthesis. Converts cobyric acid to cobinamide by the addition of aminopropanol on the F carboxylic group. The protein is Cobalamin biosynthesis protein CobD of Geobacter metallireducens (strain ATCC 53774 / DSM 7210 / GS-15).